The following is a 991-amino-acid chain: 5'-3' exoribonuclease 2 (991 aa).

The Nuclear localization signal signature appears at 264-268 (TKKTK). The segment covering 404–418 (RRNENYRRRQQRESN) has biased composition (basic and acidic residues). 3 disordered regions span residues 404 to 461 (RRNE…TQKI), 547 to 582 (SIESSTPVVHPIDTKVSNVGQKRKAPDSTEENENTD), and 872 to 991 (AERS…NGYY). Low complexity predominate over residues 433 to 452 (SVETQSTEVVTSSKSTSVDT). Low complexity-rich tracts occupy residues 878 to 889 (SRRNNGNSYRGG) and 896 to 910 (RRSYQSQSYSSRQSY). Positions 926–938 (WSGNGNFPRSNAS) are enriched in polar residues. Gly residues predominate over residues 946 to 958 (EGYGGRSRGGGYS). Polar residues predominate over residues 980–991 (ESYNNNNRNGYY).

Belongs to the 5'-3' exonuclease family. XRN2/RAT1 subfamily. Interacts with din1/rai1; the interaction is direct, stabilizes dhp1 protein structure and may stimulate its exoribonuclease activity. The interaction also stimulates din1 pyrophosphohydrolase activity, probably by recruiting it to mRNA substrates.

The protein resides in the nucleus. In terms of biological role, possesses 5'-&gt;3' exoribonuclease activity. Required for the processing of nuclear mRNA and rRNA precursors. May promote the termination of transcription by RNA polymerase II. Essential for vegetative cell growth and chromosome segregation. The sequence is that of 5'-3' exoribonuclease 2 (dhp1) from Schizosaccharomyces pombe (strain 972 / ATCC 24843) (Fission yeast).